Here is a 179-residue protein sequence, read N- to C-terminus: Cytochrome b6-f complex iron-sulfur subunit (179 aa).

The helical transmembrane segment at 21 to 43 (LLTFGTVTGVALGALYPVVNYFI) threads the bilayer. Residues 61-162 (GNDIIVSEFL…ANVSDDKLVF (102 aa)) form the Rieske domain. [2Fe-2S] cluster-binding residues include cysteine 108, histidine 110, cysteine 126, and histidine 129. Cysteine 113 and cysteine 128 are disulfide-bonded.

Belongs to the Rieske iron-sulfur protein family. In terms of assembly, the 4 large subunits of the cytochrome b6-f complex are cytochrome b6, subunit IV (17 kDa polypeptide, PetD), cytochrome f and the Rieske protein, while the 4 small subunits are PetG, PetL, PetM and PetN. The complex functions as a dimer. The cofactor is [2Fe-2S] cluster.

It localises to the cellular thylakoid membrane. The enzyme catalyses 2 oxidized [plastocyanin] + a plastoquinol + 2 H(+)(in) = 2 reduced [plastocyanin] + a plastoquinone + 4 H(+)(out). In terms of biological role, component of the cytochrome b6-f complex, which mediates electron transfer between photosystem II (PSII) and photosystem I (PSI), cyclic electron flow around PSI, and state transitions. The sequence is that of Cytochrome b6-f complex iron-sulfur subunit from Trichodesmium erythraeum (strain IMS101).